The sequence spans 282 residues: Sulfur carrier protein FdhD (282 aa).

The active-site Cysteine persulfide intermediate is C115.

It belongs to the FdhD family.

The protein localises to the cytoplasm. Its function is as follows. Required for formate dehydrogenase (FDH) activity. Acts as a sulfur carrier protein that transfers sulfur from IscS to the molybdenum cofactor prior to its insertion into FDH. The protein is Sulfur carrier protein FdhD of Streptomyces coelicolor (strain ATCC BAA-471 / A3(2) / M145).